Consider the following 690-residue polypeptide: ATP-dependent DNA helicase Hel308 (690 aa).

ATP-binding positions include Gln26 and 45-52 (IPTASGKT). The Helicase ATP-binding domain maps to 32–188 (AGYLESEDNY…WLDARVVEHD (157 aa)). A DEAH box motif is present at residues 133–136 (DEFH). The 210-residue stretch at 208–417 (EKNDVVLKVL…NRDALYRQII (210 aa)) folds into the Helicase C-terminal domain.

This sequence belongs to the helicase family. Hel308 subfamily. In terms of assembly, monomer. Binds replication protein A (RPA), in presence and absence of DNA.

It catalyses the reaction Couples ATP hydrolysis with the unwinding of duplex DNA by translocating in the 3'-5' direction.. The catalysed reaction is ATP + H2O = ADP + phosphate + H(+). Functionally, DNA-dependent ATPase and 3'-5' DNA helicase that may be involved in repair of stalled replication forks. Helicase with 3'-to 5'- polarity; able to unwind over 100 bp of DNA at 50 degrees Celsius. Unwinds forked DNA, preferentially on lagging strand forks; has weaker activity on Holliday junctions. Displaces the invading strand in DNA D-loops. Unwinds short oligonucleotides from dsDNA with 3'- but not blunt ends or 5'-ssDNA tails in an ATP-dependent manner. ATPase activity is stimulated by ssDNA but not dsDNA, protein binds ssDNA, dsDNA with 5'- or 3'-overhangs but not blunt ended dsDNA and replication forks. Replication forks bind both this protein and RPA. RPA does not stimulate the helicase activity of this protein. This is ATP-dependent DNA helicase Hel308 from Methanothermobacter thermautotrophicus (strain ATCC 29096 / DSM 1053 / JCM 10044 / NBRC 100330 / Delta H) (Methanobacterium thermoautotrophicum).